We begin with the raw amino-acid sequence, 126 residues long: Holo-[acyl-carrier-protein] synthase (126 aa).

Mg(2+) contacts are provided by aspartate 9 and glutamate 58.

It belongs to the P-Pant transferase superfamily. AcpS family. Mg(2+) serves as cofactor.

It is found in the cytoplasm. The enzyme catalyses apo-[ACP] + CoA = holo-[ACP] + adenosine 3',5'-bisphosphate + H(+). Its function is as follows. Transfers the 4'-phosphopantetheine moiety from coenzyme A to a Ser of acyl-carrier-protein. In Yersinia pseudotuberculosis serotype I (strain IP32953), this protein is Holo-[acyl-carrier-protein] synthase.